Here is a 405-residue protein sequence, read N- to C-terminus: Protein NDRG4 (405 aa).

The tract at residues 352-405 is disordered; the sequence is AGAVPSASMTRLARSRTASLTSASSVDGARPRPCTQSESSDGIGQINHTMEVSC. Positions 361–376 are enriched in low complexity; it reads TRLARSRTASLTSASS. A compositionally biased stretch (polar residues) spans 385 to 405; the sequence is CTQSESSDGIGQINHTMEVSC.

Belongs to the NDRG family.

The protein localises to the cytoplasm. Its subcellular location is the cytosol. Contributes to the maintenance of intracerebral BDNF levels within the normal range. May enhance growth factor-induced ERK1 and ERK2 phosphorylation. May attenuate growth factor-promoted ELK1 phosphorylation in a microtubule-dependent manner. The chain is Protein NDRG4 from Xenopus tropicalis (Western clawed frog).